We begin with the raw amino-acid sequence, 297 residues long: Probable endonuclease 4 (297 aa).

Residues H69, H110, E145, D179, H182, H214, D227, H229, and E259 each contribute to the Zn(2+) site.

Belongs to the AP endonuclease 2 family. It depends on Zn(2+) as a cofactor.

The enzyme catalyses Endonucleolytic cleavage to 5'-phosphooligonucleotide end-products.. In terms of biological role, endonuclease IV plays a role in DNA repair. It cleaves phosphodiester bonds at apurinic or apyrimidinic (AP) sites, generating a 3'-hydroxyl group and a 5'-terminal sugar phosphate. The protein is Probable endonuclease 4 of Listeria innocua serovar 6a (strain ATCC BAA-680 / CLIP 11262).